We begin with the raw amino-acid sequence, 317 residues long: Small ribosomal subunit protein uS2 (317 aa).

Ser-2 is modified (N-acetylserine). 2 laminin-binding regions span residues Ile-161–Arg-180 and Arg-205–Gly-229. [DE]-W-[ST] repeat units lie at residues Glu-230 to Ser-232, Asp-245 to Ser-247, Asp-288 to Ser-290, Asp-297 to Ser-299, and Glu-315 to Ser-317. Residues Glu-242 to Ser-317 form a laminin-binding region. A disordered region spans residues Pro-278–Ser-317.

The protein belongs to the universal ribosomal protein uS2 family. In terms of assembly, monomer (37LRP) and homodimer (67LR). Component of the small ribosomal subunit. Mature ribosomes consist of a small (40S) and a large (60S) subunit. The 40S subunit contains about 33 different proteins and 1 molecule of RNA (18S). The 60S subunit contains about 49 different proteins and 3 molecules of RNA (28S, 5.8S and 5S). Interacts with rps21. Interacts with several laminins including at least lamb1. Interacts with mdk. In terms of processing, acylated. Acylation may be a prerequisite for conversion of the monomeric 37 kDa laminin receptor precursor (37LRP) to the mature dimeric 67 kDa laminin receptor (67LR), and may provide a mechanism for membrane association. Post-translationally, cleaved by stromelysin-3 (ST3) at the cell surface. Cleavage by stromelysin-3 may be a mechanism to alter cell-extracellular matrix interactions.

It localises to the cell membrane. It is found in the cytoplasm. The protein localises to the nucleus. Functionally, required for the assembly and/or stability of the 40S ribosomal subunit. Required for the processing of the 20S rRNA-precursor to mature 18S rRNA in a late step of the maturation of 40S ribosomal subunits. Also functions as a cell surface receptor for laminin. Plays a role in cell adhesion to the basement membrane and in the consequent activation of signaling transduction pathways. May play a role in cell fate determination and tissue morphogenesis. In Ictalurus punctatus (Channel catfish), this protein is Small ribosomal subunit protein uS2 (rpsa).